We begin with the raw amino-acid sequence, 200 residues long: dITP/XTP pyrophosphatase (200 aa).

Residue 8 to 13 (TRNAGK) participates in substrate binding. The active-site Proton acceptor is aspartate 72. Aspartate 72 contacts Mg(2+). Substrate-binding positions include serine 73, 155 to 158 (FGYD), lysine 178, and 183 to 184 (HR).

It belongs to the HAM1 NTPase family. In terms of assembly, homodimer. It depends on Mg(2+) as a cofactor.

The enzyme catalyses XTP + H2O = XMP + diphosphate + H(+). It catalyses the reaction dITP + H2O = dIMP + diphosphate + H(+). The catalysed reaction is ITP + H2O = IMP + diphosphate + H(+). In terms of biological role, pyrophosphatase that catalyzes the hydrolysis of nucleoside triphosphates to their monophosphate derivatives, with a high preference for the non-canonical purine nucleotides XTP (xanthosine triphosphate), dITP (deoxyinosine triphosphate) and ITP. Seems to function as a house-cleaning enzyme that removes non-canonical purine nucleotides from the nucleotide pool, thus preventing their incorporation into DNA/RNA and avoiding chromosomal lesions. This is dITP/XTP pyrophosphatase from Streptomyces avermitilis (strain ATCC 31267 / DSM 46492 / JCM 5070 / NBRC 14893 / NCIMB 12804 / NRRL 8165 / MA-4680).